A 479-amino-acid chain; its full sequence is T-box transcription factor TBX1 (479 aa).

Low complexity-rich tracts occupy residues 15 to 31 and 59 to 86; these read ASSL…ADPF and YPFA…AAAV. Positions 15–86 are disordered; it reads ASSLSGLGSP…GPGASRAAAV (72 aa). A DNA-binding region (T-box) is located at residues 108–286; it reads LWDEFNQLGT…SNPFAKGFRD (179 aa). The interval 311 to 398 is disordered; sequence RNPVASPTQP…APGASEPLHH (88 aa). Residues 313–322 are compositionally biased toward polar residues; the sequence is PVASPTQPNG. Basic and acidic residues predominate over residues 323 to 338; that stretch reads SDKDAAEARREFDRDS. The Nuclear localization signal motif lies at 415 to 426; it reads KSRPAPYPLPGL.

In terms of assembly, binds DNA as a dimer. Interacts with DSCR6. Interacts with NKX2-5. In terms of tissue distribution, expressed in skeletal muscle, lung and testis. Highly expressed in hair follicle stem cell, but not in terminally differentiating cells.

It localises to the nucleus. Transcription factor that plays a key role in cardiovascular development by promoting pharyngeal arch segmentation during embryonic development. Also involved in craniofacial muscle development. Together with NKX2-5, acts as a regulator of asymmetric cardiac morphogenesis by promoting expression of PITX2. Acts upstream of TBX1 for the formation of the thymus and parathyroid glands from the third pharyngeal pouch. Required for hair follicle stem cell self-renewal. Binds to the palindromic T site 5'-TTCACACCTAGGTGTGAA-3' DNA sequence. This is T-box transcription factor TBX1 from Mus musculus (Mouse).